A 292-amino-acid polypeptide reads, in one-letter code: Elongation factor Ts (292 aa).

Residues Thr-82–Val-85 are involved in Mg(2+) ion dislocation from EF-Tu.

Belongs to the EF-Ts family.

It localises to the cytoplasm. Functionally, associates with the EF-Tu.GDP complex and induces the exchange of GDP to GTP. It remains bound to the aminoacyl-tRNA.EF-Tu.GTP complex up to the GTP hydrolysis stage on the ribosome. The sequence is that of Elongation factor Ts from Bordetella parapertussis (strain 12822 / ATCC BAA-587 / NCTC 13253).